Reading from the N-terminus, the 174-residue chain is FITAAFGIPQISTGDMLRAAIKAGTPLGLEAKKIIDEGGLVRDDIIIGMVKERIAQDDCKNGFLFDGFPRTLAQAEAMVEAGVDLDAVVEIDVPDSVIVDRMSGRRVHLASGRTYHVTYNPPKVEGKDDVTGEDLIQRDDDKEETVKKRLAVYHEQTEVLVDFYSKLEGEHAPK.

Positions 12–41 (STGDMLRAAIKAGTPLGLEAKKIIDEGGLV) are NMP. Residues T13, R18, 39-41 (GLV), 67-70 (GFPR), and Q74 contribute to the AMP site. The interval 104 to 141 (GRRVHLASGRTYHVTYNPPKVEGKDDVTGEDLIQRDDD) is LID. ATP contacts are provided by residues R105 and 114–115 (TY). AMP-binding residues include R138 and R149.

It belongs to the adenylate kinase family. Monomer.

The protein localises to the cytoplasm. It carries out the reaction AMP + ATP = 2 ADP. Its pathway is purine metabolism; AMP biosynthesis via salvage pathway; AMP from ADP: step 1/1. Functionally, catalyzes the reversible transfer of the terminal phosphate group between ATP and AMP. Plays an important role in cellular energy homeostasis and in adenine nucleotide metabolism. The protein is Adenylate kinase of Neisseria lactamica.